A 179-amino-acid polypeptide reads, in one-letter code: Large ribosomal subunit protein uL5 (179 aa).

It belongs to the universal ribosomal protein uL5 family. In terms of assembly, part of the 50S ribosomal subunit; part of the 5S rRNA/L5/L18/L25 subcomplex. Contacts the 5S rRNA and the P site tRNA. Forms a bridge to the 30S subunit in the 70S ribosome.

Functionally, this is one of the proteins that bind and probably mediate the attachment of the 5S RNA into the large ribosomal subunit, where it forms part of the central protuberance. In the 70S ribosome it contacts protein S13 of the 30S subunit (bridge B1b), connecting the 2 subunits; this bridge is implicated in subunit movement. Contacts the P site tRNA; the 5S rRNA and some of its associated proteins might help stabilize positioning of ribosome-bound tRNAs. The polypeptide is Large ribosomal subunit protein uL5 (Enterobacter sp. (strain 638)).